The following is an 82-amino-acid chain: Small ribosomal subunit protein bS16 (82 aa).

This sequence belongs to the bacterial ribosomal protein bS16 family.

The polypeptide is Small ribosomal subunit protein bS16 (Pectobacterium carotovorum subsp. carotovorum (strain PC1)).